The primary structure comprises 682 residues: MIDRYKHQQLQIGSVSPQQISAWANKILPNGEIVGEVTKPYTFHYKTNKPEKDGLFCERIFGPIKSGICACGNYRVIGAEKEDPKFCEQCGVEFIDSRIRRYQMGYIKLACPVTHVWYLKRLPSYIANLLDKPLKELEGLVYCDFSFARPIAKKPTFLRLRGLFEYEIQSWKYSIPLFFTTQGFDTFRNREISTGAGAIREQLADLDLRIVIDNSSVEWKELGDEGSTGNEWEDRKIGRRKDFLVRRMELAKHFIRTNVEPERMVLCLLPVLPPELRPIIQIDGGKLMSSDINELYRRVIYRNNTLTDLLKTSRSTPGELVMCQEKLVQEAVDTLLDNGIRGQPMRDGHNKVYKSFSDVIEGKEGRFRETLLGKRVDYSGRSVIVVGPSLSLHRCGLPREIAIELFQTFVIRGLIRQHLASNIGIAKSKIREKEPIVWEILQEVMQGHPVLLNRAPTLHRLGIQAFQPVLVEGRAICLHPLVCKGFNADFDGDQMAVHVPLSLEAQAEARLLMFSHMNLLSPAIGDPISVPTQDMLIGLYVLTMGNHRGIFVNRYNPCNRRNYQNKTVDNNNYKHTKEKKPYFFSSYDALGAYQQKRINLHRPLWLRWRLDQRVIGSREVPIEVQYESLGTYQEIYGHYLIVRSVKKEILCIYIRTTVGHISFYREIEESVQGFCRAYSYGT.

4 residues coordinate Zn(2+): Cys69, Cys71, Cys87, and Cys90. Mg(2+)-binding residues include Asp489, Asp491, and Asp493.

Belongs to the RNA polymerase beta' chain family. RpoC1 subfamily. In plastids the minimal PEP RNA polymerase catalytic core is composed of four subunits: alpha, beta, beta', and beta''. When a (nuclear-encoded) sigma factor is associated with the core the holoenzyme is formed, which can initiate transcription. Requires Mg(2+) as cofactor. It depends on Zn(2+) as a cofactor.

It is found in the plastid. Its subcellular location is the chloroplast. It catalyses the reaction RNA(n) + a ribonucleoside 5'-triphosphate = RNA(n+1) + diphosphate. DNA-dependent RNA polymerase catalyzes the transcription of DNA into RNA using the four ribonucleoside triphosphates as substrates. This Acorus gramineus (Dwarf sweet flag) protein is DNA-directed RNA polymerase subunit beta'.